A 472-amino-acid chain; its full sequence is Clampless protein 1 (472 aa).

N-linked (GlcNAc...) asparagine glycosylation is found at asparagine 70 and asparagine 296.

Required for developmental progression after cells of opposite mating types fuse with one another, essential for processes common to both dikaryotic filament formation and monokaryotic fruiting. A direct target for transcription factors Sxi1-alpha and Sxi2-a. The protein is Clampless protein 1 of Cryptococcus neoformans var. neoformans serotype D (strain B-3501A) (Filobasidiella neoformans).